The chain runs to 251 residues: LexA repressor (251 aa).

The segment at residues 26 to 46 (FDEMKDALGLKSKSGIHRLIK) is a DNA-binding region (H-T-H motif). Catalysis depends on for autocatalytic cleavage activity residues serine 172 and lysine 210.

Belongs to the peptidase S24 family. Homodimer.

The enzyme catalyses Hydrolysis of Ala-|-Gly bond in repressor LexA.. Represses a number of genes involved in the response to DNA damage (SOS response), including recA and lexA. In the presence of single-stranded DNA, RecA interacts with LexA causing an autocatalytic cleavage which disrupts the DNA-binding part of LexA, leading to derepression of the SOS regulon and eventually DNA repair. In Rhodospirillum rubrum (strain ATCC 11170 / ATH 1.1.1 / DSM 467 / LMG 4362 / NCIMB 8255 / S1), this protein is LexA repressor.